We begin with the raw amino-acid sequence, 91 residues long: Acylphosphatase (91 aa).

An Acylphosphatase-like domain is found at cysteine 5–arginine 91. Catalysis depends on residues arginine 20 and asparagine 38.

This sequence belongs to the acylphosphatase family.

It catalyses the reaction an acyl phosphate + H2O = a carboxylate + phosphate + H(+). The sequence is that of Acylphosphatase (acyP) from Pseudomonas aeruginosa (strain ATCC 15692 / DSM 22644 / CIP 104116 / JCM 14847 / LMG 12228 / 1C / PRS 101 / PAO1).